A 453-amino-acid chain; its full sequence is GTPase Der (453 aa).

EngA-type G domains are found at residues 4–169 (PIVA…PPTT) and 177–352 (IKIA…EEHK). GTP contacts are provided by residues 10–17 (GRPNVGKS), 57–61 (DTGGL), 120–123 (NKCE), 183–190 (GRPNVGKS), 230–234 (DTAGI), and 295–298 (NKWD). In terms of domain architecture, KH-like spans 353-438 (RRVSTSVINE…PIRLLWRSKK (86 aa)).

The protein belongs to the TRAFAC class TrmE-Era-EngA-EngB-Septin-like GTPase superfamily. EngA (Der) GTPase family. Associates with the 50S ribosomal subunit.

GTPase that plays an essential role in the late steps of ribosome biogenesis. The chain is GTPase Der from Trichormus variabilis (strain ATCC 29413 / PCC 7937) (Anabaena variabilis).